The following is a 297-amino-acid chain: tRNA (guanine(37)-N(1))/4-demethylwyosine(37)-methyltransferase Taw22 (297 aa).

Residues Arg-89, Phe-106, and Glu-128 to Leu-129 contribute to the S-adenosyl-L-methionine site.

Belongs to the class I-like SAM-binding methyltransferase superfamily. TRM5/TYW2 family.

The protein resides in the cytoplasm. The catalysed reaction is guanosine(37) in tRNA + S-adenosyl-L-methionine = N(1)-methylguanosine(37) in tRNA + S-adenosyl-L-homocysteine + H(+). It catalyses the reaction 4-demethylwyosine(37) in tRNA(Phe) + S-adenosyl-L-methionine = isowyosine(37) in tRNA(Phe) + S-adenosyl-L-homocysteine + H(+). Its function is as follows. Catalyzes both the N1-methylation of guanosine and the C7-methylation of 4-demethylwyosine (imG-14) at position 37 in tRNA(Phe). In Nanoarchaeum equitans (strain Kin4-M), this protein is tRNA (guanine(37)-N(1))/4-demethylwyosine(37)-methyltransferase Taw22.